The sequence spans 270 residues: Cystinosin homolog (270 aa).

Residues 9–75 (LEISYEIVGW…LYFSPVIQKQ (67 aa)) enclose the PQ-loop 1 domain. A helical membrane pass occupies residues 14 to 34 (EIVGWIAFASWSISFYPQLIL). Residue Asn-52 is glycosylated (N-linked (GlcNAc...) asparagine). 3 consecutive transmembrane segments (helical) span residues 93-113 (VAFS…IFIY), 123-143 (LAIG…FIAL), and 148-168 (WLWL…VKYI). Residues 151-213 (LISIFNSIQV…IQSIDQNSWK (63 aa)) enclose the PQ-loop 2 domain. Asn-174 carries N-linked (GlcNAc...) asparagine glycosylation. 2 helical membrane-spanning segments follow: residues 180-200 (TVGW…ANYL) and 223-243 (LLSL…YVLY). The segment at 250–270 (KSPETGEESNEPLIDSSHEHV) is disordered.

Belongs to the cystinosin (TC 2.A.43.1) family.

It localises to the lysosome membrane. Its function is as follows. Thought to transport cystine out of lysosomes. The polypeptide is Cystinosin homolog (Arabidopsis thaliana (Mouse-ear cress)).